The following is a 336-amino-acid chain: Dihydroorotate dehydrogenase (quinone) (336 aa).

FMN is bound by residues 62 to 66 (AGLDK) and Thr-86. Position 66 (Lys-66) interacts with substrate. Residue 111 to 115 (NRMGF) coordinates substrate. The FMN site is built by Asn-139 and Asn-172. A substrate-binding site is contributed by Asn-172. The Nucleophile role is filled by Ser-175. Asn-177 contributes to the substrate binding site. Positions 217 and 245 each coordinate FMN. Residue 246–247 (NT) coordinates substrate. Residues Gly-268, Gly-297, and 318–319 (YS) contribute to the FMN site.

The protein belongs to the dihydroorotate dehydrogenase family. Type 2 subfamily. In terms of assembly, monomer. It depends on FMN as a cofactor.

It is found in the cell membrane. The catalysed reaction is (S)-dihydroorotate + a quinone = orotate + a quinol. It functions in the pathway pyrimidine metabolism; UMP biosynthesis via de novo pathway; orotate from (S)-dihydroorotate (quinone route): step 1/1. In terms of biological role, catalyzes the conversion of dihydroorotate to orotate with quinone as electron acceptor. This is Dihydroorotate dehydrogenase (quinone) from Vibrio vulnificus (strain YJ016).